The primary structure comprises 97 residues: Putative defensin-like protein 237 (97 aa).

The first 23 residues, 1-23, serve as a signal peptide directing secretion; it reads MRHATSPIVFCFLIFLVMNHVKG. 4 disulfides stabilise this stretch: Cys30–Cys94, Cys40–Cys71, Cys48–Cys84, and Cys69–Cys86.

Belongs to the DEFL family.

The protein localises to the secreted. The chain is Putative defensin-like protein 237 (SCRL21) from Arabidopsis thaliana (Mouse-ear cress).